A 218-amino-acid chain; its full sequence is Adenylate kinase (218 aa).

10–15 (GAGKGT) is a binding site for ATP. An NMP region spans residues 30–59 (STGDMLRAAVKEGSELGLKVKEIMNSGGLV). Residues Thr31, Arg36, 57–59 (GLV), 85–88 (GFPR), and Gln92 contribute to the AMP site. Residues 122 to 159 (GRRVHPGSGRVYHVDYNPPKEEGKDDVTGEALIQRDDD) are LID. ATP is bound by residues Arg123 and 132 to 133 (VY). Positions 156 and 167 each coordinate AMP. Gly203 serves as a coordination point for ATP.

The protein belongs to the adenylate kinase family. In terms of assembly, monomer.

The protein resides in the cytoplasm. The catalysed reaction is AMP + ATP = 2 ADP. It functions in the pathway purine metabolism; AMP biosynthesis via salvage pathway; AMP from ADP: step 1/1. In terms of biological role, catalyzes the reversible transfer of the terminal phosphate group between ATP and AMP. Plays an important role in cellular energy homeostasis and in adenine nucleotide metabolism. The protein is Adenylate kinase of Chromohalobacter salexigens (strain ATCC BAA-138 / DSM 3043 / CIP 106854 / NCIMB 13768 / 1H11).